The chain runs to 565 residues: NAD-dependent malic enzyme (565 aa).

The Proton donor role is filled by Y104. Residue R157 participates in NAD(+) binding. K175 (proton acceptor) is an active-site residue. The a divalent metal cation site is built by E246, D247, and D270. D270 and N418 together coordinate NAD(+).

This sequence belongs to the malic enzymes family. Homotetramer. It depends on Mg(2+) as a cofactor. Mn(2+) serves as cofactor.

It catalyses the reaction (S)-malate + NAD(+) = pyruvate + CO2 + NADH. The enzyme catalyses oxaloacetate + H(+) = pyruvate + CO2. The chain is NAD-dependent malic enzyme from Proteus mirabilis (strain HI4320).